Here is a 360-residue protein sequence, read N- to C-terminus: Probable dual-specificity RNA methyltransferase RlmN (360 aa).

E103 acts as the Proton acceptor in catalysis. The Radical SAM core domain occupies 109-342 (HEYGNSVCVT…VTIRREQGHD (234 aa)). A disulfide bridge links C116 with C347. The [4Fe-4S] cluster site is built by C123, C127, and C130. S-adenosyl-L-methionine contacts are provided by residues 173–174 (GE), S205, 228–230 (SLH), and N304. C347 (S-methylcysteine intermediate) is an active-site residue.

Belongs to the radical SAM superfamily. RlmN family. It depends on [4Fe-4S] cluster as a cofactor.

It localises to the cytoplasm. The catalysed reaction is adenosine(2503) in 23S rRNA + 2 reduced [2Fe-2S]-[ferredoxin] + 2 S-adenosyl-L-methionine = 2-methyladenosine(2503) in 23S rRNA + 5'-deoxyadenosine + L-methionine + 2 oxidized [2Fe-2S]-[ferredoxin] + S-adenosyl-L-homocysteine. It catalyses the reaction adenosine(37) in tRNA + 2 reduced [2Fe-2S]-[ferredoxin] + 2 S-adenosyl-L-methionine = 2-methyladenosine(37) in tRNA + 5'-deoxyadenosine + L-methionine + 2 oxidized [2Fe-2S]-[ferredoxin] + S-adenosyl-L-homocysteine. In terms of biological role, specifically methylates position 2 of adenine 2503 in 23S rRNA and position 2 of adenine 37 in tRNAs. This is Probable dual-specificity RNA methyltransferase RlmN from Bacillus pumilus (strain SAFR-032).